The primary structure comprises 327 residues: Methionine import ATP-binding protein MetN (327 aa).

Positions 3–239 (VELKNIEKIY…PKHAVTKELI (237 aa)) constitute an ABC transporter domain. Residue 36–43 (GYSGAGKS) coordinates ATP.

Belongs to the ABC transporter superfamily. Methionine importer (TC 3.A.1.24) family. As to quaternary structure, the complex is composed of two ATP-binding proteins (MetN), two transmembrane proteins (MetI) and a solute-binding protein (MetQ).

It is found in the cell inner membrane. The enzyme catalyses L-methionine(out) + ATP + H2O = L-methionine(in) + ADP + phosphate + H(+). It carries out the reaction D-methionine(out) + ATP + H2O = D-methionine(in) + ADP + phosphate + H(+). Its function is as follows. Part of the ABC transporter complex MetNIQ involved in methionine import. Responsible for energy coupling to the transport system. This Helicobacter acinonychis (strain Sheeba) protein is Methionine import ATP-binding protein MetN.